A 1340-amino-acid polypeptide reads, in one-letter code: MEFQNDFLTNPLRVTLYNPAENEYTKTFIFLGSVPANVLQACRKDLQRTPKDKEILQNFYGEDWEKKLSQYVVGGDSDDLDEFEKLFVEDSGEEANVMMPEIETMYSEYSIFPEDTFKDIREKIYVATGIPPYRQHIFFFQNNALQVTYRLLLSGSGVALDIRDYKKEFQQVGGLNIDASMESQKDELYVEALDSFQLIKNIHHIFVADLNTLVAPMRRQISIAIEDNYQFDLLYYGLIMKYWPLLSPDAFKLLIQSPLQMEKQYPALSPSLTSLKKRLLLEQKLINFTYAKAQQVIAKYEGNRLTRGTLAVTSAMIKISPLVNIQINVRNVFDLFPATPDIPQLVVFFYSKTGPTVVSKHHITSTEPEKFSNKTFRVPTIILIRFINKKAFILTIQNNGHYFIESNWSENERHDFNSVVSTLNNFINPIIHTINDMGPAAFPRGGSLPLPSNEDIQISISSMSVSTFWPYTLSSKGFTELKSRWREYEQAGIISVRGLQQTGVYNFLFKKGIYSYDPHEIERMIIISSGPGRKMDINVALLQNTYAYLFDTNVAARWETIYGGRNIRIYHRVTDIKIEMFNITQEEFNYLWVYLFVFLDNMISGPDKIMVNKLSQLHDKQQGKGASQLRALQEQDPDLYDLRKYDTQATVYSVLCQHPRPPVIYSEAEVKSMPPAKRKELVKYWNFTEGVPAYYSCPHPDYPHLSLLEGRHPLNYCLPCCQKTKALLGTKRFYINNTCLTKHTFVEQDLEDLNTQTSRHTLSYGKKIPVNRIAFLPHQIADELFSNTIKEPDIFCIVGVEQTMLGISNAGLFYSLARILDLAPKALAVEIAKAANTPQYYILGNGAGNMFSSGAELANLILQTFVEQKNQLLQWDTTWQDIFLDLVAICYDLHCVFFKDKQGDIEFEVSPSTIQKILSPSKKIAIIFDTDEGIYPMAMTQQKRFLKNSEAQYIFTEDDPVMEVIHSMSEFMCKDGWWDIHDVKNIPGYTVTKKFINRHNFCYALLIDSGTDRPIYFPIRLSSYIHDDIPIDFDLRPTHIAGFEETWKFISLFNKQYKQYEIIPSAVLQNIKKEFVGFLSEGKTGLYFYYAPTQTLPATLEKLPIATLTMDPRDIDQAILYPLEEPYPQQDKANKAFYINHLYKFLLIEFFDVLYGLQSNTTRKHIEDLFQKTDFQKINSVTEFYTKLSDFVDLNDIHTIKHILETTGAEHALKVLQKNVFNFDYVLLSPLQSYTYDELCQHLKKLLTPRIEFYEDIETIDRGLINIYTSCQYSTLNQPQCEKKRLRIPVNHFENYINILAADILNPLKHSTLLLTGLGVIDDLQFILRPQEIINVKNKF.

It localises to the virion. Its function is as follows. Putative initation factor. The polypeptide is Early transcription factor large subunit homolog (Ornithodoros (relapsing fever ticks)).